The following is a 325-amino-acid chain: Tetraacyldisaccharide 4'-kinase (325 aa).

55–62 (TAGGNGKT) is an ATP binding site.

Belongs to the LpxK family.

The catalysed reaction is a lipid A disaccharide + ATP = a lipid IVA + ADP + H(+). It functions in the pathway glycolipid biosynthesis; lipid IV(A) biosynthesis; lipid IV(A) from (3R)-3-hydroxytetradecanoyl-[acyl-carrier-protein] and UDP-N-acetyl-alpha-D-glucosamine: step 6/6. Transfers the gamma-phosphate of ATP to the 4'-position of a tetraacyldisaccharide 1-phosphate intermediate (termed DS-1-P) to form tetraacyldisaccharide 1,4'-bis-phosphate (lipid IVA). The polypeptide is Tetraacyldisaccharide 4'-kinase (Citrobacter koseri (strain ATCC BAA-895 / CDC 4225-83 / SGSC4696)).